Consider the following 84-residue polypeptide: Putative membrane protein insertion efficiency factor (84 aa).

It belongs to the UPF0161 family.

The protein localises to the cell inner membrane. Functionally, could be involved in insertion of integral membrane proteins into the membrane. In Shewanella loihica (strain ATCC BAA-1088 / PV-4), this protein is Putative membrane protein insertion efficiency factor.